The primary structure comprises 190 residues: Ganglioside GM2 activator (190 aa).

The N-terminal stretch at 1–23 (MQSLMQAPVLIALGLLFAAPAQA) is a signal peptide. Disulfide bonds link Cys-36–Cys-180, Cys-96–Cys-103, Cys-109–Cys-135, and Cys-122–Cys-133. Asn-60 carries an N-linked (GlcNAc...) asparagine glycan.

The protein resides in the lysosome. It catalyses the reaction cholesterol(in) = cholesterol(out). Its function is as follows. The large binding pocket can accommodate several single chain phospholipids and fatty acids, GM2A also exhibits some calcium-independent phospholipase activity. Binds gangliosides and stimulates ganglioside GM2 degradation. It stimulates only the breakdown of ganglioside GM2 and glycolipid GA2 by beta-hexosaminidase A. It extracts single GM2 molecules from membranes and presents them in soluble form to beta-hexosaminidase A for cleavage of N-acetyl-D-galactosamine and conversion to GM3. Has cholesterol transfer activity. The polypeptide is Ganglioside GM2 activator (GM2A) (Macaca fascicularis (Crab-eating macaque)).